A 517-amino-acid chain; its full sequence is MHDSFLSANGGFVVSKKTPHGLRLKHLGIKTYHEAIIYMREDCHVCHSEGFEVQTRIQVTLGSRSIIATLNVVTSELLQPGEAGLSDYAWESLHAKEGDEIQVSHPKPLESLSYVHAKIYGNELSFEQMKVIIDDVLSGRLSDVQISAFLAASGAGRLTRTEVMKLTKAMIDSGDRLSWPSPLVVDKHCVGGLPGNRTTLIVVPIVASFGLMIPKTSSRAITSPAGTADTMETLAPVHLSPQKMRQVVEQENGCIVWGGAVSLSPADDVLIRVERAIDLDSEGQLVASILSKKIATGATHAVIDIPVGPTAKVRNQSMALLLKQSLEEVGNELGLVVRALFTDGSQPVGHGIGPSLEARDVLAVLQGLPDAPNDLRERALTLAGAALECSSKVPPGLGKSIATQLLESGQAFKKFQAICEAQGGMRELTKARFTYPVVAAKEGKVSLIDNRKLAKIAKLAGAPKSKSAGIDLHAHVGESVEQGEPLFTIHSESLGELHYACDLLRDKQDIIILGENP.

Belongs to the thymidine/pyrimidine-nucleoside phosphorylase family. Type 2 subfamily.

It catalyses the reaction thymidine + phosphate = 2-deoxy-alpha-D-ribose 1-phosphate + thymine. The sequence is that of Putative thymidine phosphorylase from Legionella pneumophila subsp. pneumophila (strain Philadelphia 1 / ATCC 33152 / DSM 7513).